The chain runs to 694 residues: MAEKTKEETQLWNGTVLQDASSLQDSVFSSESDNSLYFTYSGQSNTLEVRDLTYQGGTCLRSWGQEDPHMSLGLSESVDMASQVPWFEQLAQFKLPWRSRGSQDSWDLGIRNLSFKVRSGQMLAIIGSAGCGRATLLDVITGRDHGGKMKSGQIWINGQPSTPQLIQKCVAHVRQQDQLLPNLTVRETLTFIAQMRLPKTFSQAQRDKRVEDVIAELRLRQCANTRVGNTYVRGVSGGERRRVSIGVQLLWNPGILILDEPTSGLDSFTAHNLVRTLSRLAKGNRLVLISLHQPRSDIFRLFDLVLLMTSGTPIYLGVAQHMVQYFTSIGYPCPRYSNPADFYVDLTSIDRRSKEQEVATMEKARLLAALFLEKVQGFDDFLWKAEAKSLDTGTYAVSQTLTQDTNCGTAAELPGMIQQFTTLIRRQISNDFRDLPTLFIHGAEACLMSLIIGFLYYGHADKPLSFMDMAALLFMIGALIPFNVILDVVSKCHSERSLLYYELEDGLYTAGPYFFAKVLGELPEHCAYVIIYGMPIYWLTNLRPGPELFLLHFMLLWLVVFCCRTMALAASAMLPTFHMSSFCCNALYNSFYLTAGFMINLNNLWIVPAWISKMSFLRWCFSGLMQIQFNGHIYTTQIGNLTFSVPGDAMVTAMDLNSHPLYAIYLIVIGISCGFLSLYYLSLKFIKQKSIQDW.

Residues 1-437 (MAEKTKEETQ…ISNDFRDLPT (437 aa)) are Cytoplasmic-facing. An ABC transporter domain is found at 91–335 (AQFKLPWRSR…FTSIGYPCPR (245 aa)). An ABC transmembrane type-2 domain is found at 436 to 684 (PTLFIHGAEA…FLSLYYLSLK (249 aa)). The helical transmembrane segment at 438–458 (LFIHGAEACLMSLIIGFLYYG) threads the bilayer. Residues 459 to 468 (HADKPLSFMD) are Extracellular-facing. The chain crosses the membrane as a helical span at residues 469–489 (MAALLFMIGALIPFNVILDVV). Residues 490-518 (SKCHSERSLLYYELEDGLYTAGPYFFAKV) are Cytoplasmic-facing. Residues 519 to 539 (LGELPEHCAYVIIYGMPIYWL) form a helical membrane-spanning segment. Over 540 to 548 (TNLRPGPEL) the chain is Extracellular. A helical membrane pass occupies residues 549–569 (FLLHFMLLWLVVFCCRTMALA). The Cytoplasmic portion of the chain corresponds to 570 to 576 (ASAMLPT). The chain crosses the membrane as a helical span at residues 577–597 (FHMSSFCCNALYNSFYLTAGF). Over 598–660 (MINLNNLWIV…VTAMDLNSHP (63 aa)) the chain is Extracellular. N-linked (GlcNAc...) asparagine glycosylation occurs at Asn-640. Residues 661–681 (LYAIYLIVIGISCGFLSLYYL) traverse the membrane as a helical segment. Residues 682–694 (SLKFIKQKSIQDW) are Cytoplasmic-facing.

This sequence belongs to the ABC transporter superfamily. ABCG family. Eye pigment precursor importer (TC 3.A.1.204) subfamily. As to quaternary structure, heterodimer with ABCG8. Mg(2+) serves as cofactor. In terms of processing, N-glycosylated. N-glycosylation is important for efficient export out of the endoplasmic reticulum. In terms of tissue distribution, highest expression in liver, with lower levels in small intestine and colon.

Its subcellular location is the cell membrane. The protein resides in the apical cell membrane. It catalyses the reaction cholesterol(in) + ATP + H2O = cholesterol(out) + ADP + phosphate + H(+). The catalysed reaction is sitosterol(in) + ATP + H2O = sitosterol(out) + ADP + phosphate + H(+). Its function is as follows. ABCG5 and ABCG8 form an obligate heterodimer that mediates Mg(2+)- and ATP-dependent sterol transport across the cell membrane. Plays an essential role in the selective transport of the dietary cholesterol in and out of the enterocytes and in the selective sterol excretion by the liver into bile. Required for normal sterol homeostasis. The heterodimer with ABCG5 has ATPase activity. The polypeptide is ATP-binding cassette sub-family G member 8 (Rattus norvegicus (Rat)).